Reading from the N-terminus, the 101-residue chain is Putative regulatory protein Csac_2087 (101 aa).

Belongs to the RemA family.

This Caldicellulosiruptor saccharolyticus (strain ATCC 43494 / DSM 8903 / Tp8T 6331) protein is Putative regulatory protein Csac_2087.